A 93-amino-acid chain; its full sequence is Phosphoribosyl-ATP pyrophosphatase (93 aa).

It belongs to the PRA-PH family.

The protein localises to the cytoplasm. The enzyme catalyses 1-(5-phospho-beta-D-ribosyl)-ATP + H2O = 1-(5-phospho-beta-D-ribosyl)-5'-AMP + diphosphate + H(+). Its pathway is amino-acid biosynthesis; L-histidine biosynthesis; L-histidine from 5-phospho-alpha-D-ribose 1-diphosphate: step 2/9. This Metallosphaera sedula (strain ATCC 51363 / DSM 5348 / JCM 9185 / NBRC 15509 / TH2) protein is Phosphoribosyl-ATP pyrophosphatase.